The sequence spans 169 residues: Mitochondrial ATP-independent inner membrane protease subunit 1b (169 aa).

Residues S47 and K91 contribute to the active site.

This sequence belongs to the peptidase S26 family. IMP1 subfamily. As to quaternary structure, heterodimer of 2 subunits, IMP1A/B and IMP12.

It is found in the mitochondrion inner membrane. Catalyzes the removal of transit peptides required for the targeting of proteins from the mitochondrial matrix, across the inner membrane, into the inter-membrane space. The polypeptide is Mitochondrial ATP-independent inner membrane protease subunit 1b (Arabidopsis thaliana (Mouse-ear cress)).